The chain runs to 237 residues: ATP synthase subunit a (237 aa).

The next 5 membrane-spanning stretches (helical) occupy residues 18 to 38, 77 to 97, 114 to 134, 167 to 187, and 208 to 230; these read LTLL…VYWA, SLFL…GLMA, NIAF…VEGI, LALR…LLVT, and AFSV…MYLG.

Belongs to the ATPase A chain family. F-type ATPases have 2 components, CF(1) - the catalytic core - and CF(0) - the membrane proton channel. CF(1) has five subunits: alpha(3), beta(3), gamma(1), delta(1), epsilon(1). CF(0) has three main subunits: a(1), b(2) and c(9-12). The alpha and beta chains form an alternating ring which encloses part of the gamma chain. CF(1) is attached to CF(0) by a central stalk formed by the gamma and epsilon chains, while a peripheral stalk is formed by the delta and b chains.

It is found in the cell membrane. Key component of the proton channel; it plays a direct role in the translocation of protons across the membrane. The polypeptide is ATP synthase subunit a (Streptococcus gordonii (strain Challis / ATCC 35105 / BCRC 15272 / CH1 / DL1 / V288)).